We begin with the raw amino-acid sequence, 502 residues long: Zinc finger C3HC-type protein 1 (502 aa).

Ala-2 bears the N-acetylalanine mark. Ser-24 carries the phosphoserine modification. Thr-28 bears the Phosphothreonine mark. Residues 35–74 (LIDEGIAPEEGGVDAQDTSATSQSVNGSPQAEQPSLESTS) are disordered. A compositionally biased stretch (polar residues) spans 50 to 72 (QDTSATSQSVNGSPQAEQPSLES). 2 positions are modified to phosphoserine: Ser-58 and Ser-62. A Phosphothreonine modification is found at Thr-84. The segment at 102 to 156 (CAKYGWVTVECDMLKCSSCQAFLCASLQPAFDFDRYKQRCAELKKALCTAHEKFC) adopts a C3HC-type zinc-finger fold. The disordered stretch occupies residues 302–423 (SSPIPGLEGR…SSRSFFDPTS (122 aa)). 2 positions are modified to phosphoserine: Ser-321 and Ser-329. The residue at position 333 (Thr-333) is a Phosphothreonine. Phosphoserine is present on residues Ser-338, Ser-344, Ser-354, Ser-359, and Ser-370. The segment covering 351-360 (RTRSWDSSSP) has biased composition (polar residues). The segment covering 371 to 380 (PTTRTRPVTR) has biased composition (low complexity). Ser-381 carries the post-translational modification Phosphoserine. Thr-384 is subject to Phosphothreonine. A Phosphoserine modification is found at Ser-395. A Nuclear localization signal motif is present at residues 396–402 (PLRKAKR). 2 positions are modified to phosphoserine: Ser-407 and Ser-483. A compositionally biased stretch (low complexity) spans 407–422 (SSSSSDTSSRSFFDPT).

Interacts with TPR; this interaction mediates ZC3HC1 nuclear envelopes (NE)-association but also required for proper positioning of a substantial amount of TPR at the nuclear basket (NB). In terms of processing, phosphorylated. May also be weakly phosphorylated on Tyr residues.

The protein localises to the nucleus. The protein resides in the nucleus envelope. Required for proper positioning of a substantial amount of TPR at the nuclear basket (NB) through interaction with TPR. This is Zinc finger C3HC-type protein 1 (ZC3HC1) from Pongo abelii (Sumatran orangutan).